The chain runs to 482 residues: MKFTTYTTFPEQTSNESLWILVDSEQLQSNLNTYQINNLESILTATQFKANFNETLPLFGQLSTQPHSQLLGLGKAAELQAAKLAKLAQTIIKSAQNKFKHIAIDIAALPVEYHYLFALSLTQAAYGYDEFKSKKNEFVLQQVDLISSQTSLDENQLALVHAVQSGQSYARDLGNRPGNICFPEYLAEQALALAAEFPDLLKVTVLNEQQMADLGMYAFLAVSKGSERPGRIVTLEYQAQLEQAPVVLVGKGVTFDTGGISLKPGLGMDEMKFDMCGAASVLGTIRALCEARLPIHVVGAIAAAENMPSGKATRPGDIVTTMSGQTVEILNTDAEGRLVLCDTLTYIKRFNPAVVIDIATLTGACVVALGKVLSGLFSPDDTLAAELQQAGEQSFDRVWRMPVIDDYQELLDSPFADIANIGGPHGGAITAACFLERFTRDYRWAHLDVAGTAWLSGSAKGATGRPVPLLMQFLANRVSTNG.

K251 and D256 together coordinate Mn(2+). K263 is a catalytic residue. The Mn(2+) site is built by D274, D333, and E335. R337 is a catalytic residue.

It belongs to the peptidase M17 family. Mn(2+) serves as cofactor.

The protein resides in the cytoplasm. It catalyses the reaction Release of an N-terminal amino acid, Xaa-|-Yaa-, in which Xaa is preferably Leu, but may be other amino acids including Pro although not Arg or Lys, and Yaa may be Pro. Amino acid amides and methyl esters are also readily hydrolyzed, but rates on arylamides are exceedingly low.. It carries out the reaction Release of an N-terminal amino acid, preferentially leucine, but not glutamic or aspartic acids.. Its function is as follows. Presumably involved in the processing and regular turnover of intracellular proteins. Catalyzes the removal of unsubstituted N-terminal amino acids from various peptides. The protein is Probable cytosol aminopeptidase of Acinetobacter baumannii (strain AB307-0294).